Consider the following 92-residue polypeptide: DNA-binding protein HU (92 aa).

Residues 58–92 (AGTARNPRTGETVNRPASKTARFQVGEGLKSSLNS) form a disordered region.

Belongs to the bacterial histone-like protein family. In terms of assembly, homodimer.

In terms of biological role, histone-like DNA-binding protein which is capable of wrapping DNA to stabilize it, and thus to prevent its denaturation under extreme environmental conditions. The protein is DNA-binding protein HU (hup) of Caulobacter vibrioides (strain ATCC 19089 / CIP 103742 / CB 15) (Caulobacter crescentus).